The sequence spans 364 residues: Aminomethyltransferase (364 aa).

The protein belongs to the GcvT family. The glycine cleavage system is composed of four proteins: P, T, L and H.

The catalysed reaction is N(6)-[(R)-S(8)-aminomethyldihydrolipoyl]-L-lysyl-[protein] + (6S)-5,6,7,8-tetrahydrofolate = N(6)-[(R)-dihydrolipoyl]-L-lysyl-[protein] + (6R)-5,10-methylene-5,6,7,8-tetrahydrofolate + NH4(+). Its function is as follows. The glycine cleavage system catalyzes the degradation of glycine. The sequence is that of Aminomethyltransferase from Citrobacter koseri (strain ATCC BAA-895 / CDC 4225-83 / SGSC4696).